Here is a 203-residue protein sequence, read N- to C-terminus: MKKLLVACCLLSGFASTSVLADAAQDLQSRLAKVNSFHASFSQTVTSSDGAAVQQGEGELWVKRPNLFNWHMTSPDESVLVSDGQTLWFYNPFVEQVTATWLKNATGNTPFMLITRNNANDWKQYNVKQKGNDFELTPKSSSGNLKQFAISVDNSGTIRNFAAVEQDGQRSSYTLKSQQNVAADASKFKFTPPKGVTLDDQRQ.

The N-terminal stretch at 1-21 (MKKLLVACCLLSGFASTSVLA) is a signal peptide.

This sequence belongs to the LolA family. As to quaternary structure, monomer.

The protein resides in the periplasm. Participates in the translocation of lipoproteins from the inner membrane to the outer membrane. Only forms a complex with a lipoprotein if the residue after the N-terminal Cys is not an aspartate (The Asp acts as a targeting signal to indicate that the lipoprotein should stay in the inner membrane). In Serratia proteamaculans (strain 568), this protein is Outer-membrane lipoprotein carrier protein.